The following is a 549-amino-acid chain: Membrane protein insertase YidC (549 aa).

A helical transmembrane segment spans residues 6 to 26 (NLLLIGLLLVSFMLWQSWMVD). The tract at residues 35 to 55 (ATAESSVPASSGGDVPNQNDA) is disordered. 4 helical membrane-spanning segments follow: residues 349–369 (QFLHGLVGNWGVAIILITMIV), 424–444 (LGGCFPLLIQMPIFIALYWTL), 462–482 (LSVKDPYYVLPLLMGATMWYI), and 503–523 (PIVFTFMFLWFPSGLTLYWVV).

The protein belongs to the OXA1/ALB3/YidC family. Type 1 subfamily. Interacts with the Sec translocase complex via SecD. Specifically interacts with transmembrane segments of nascent integral membrane proteins during membrane integration.

The protein localises to the cell inner membrane. In terms of biological role, required for the insertion and/or proper folding and/or complex formation of integral membrane proteins into the membrane. Involved in integration of membrane proteins that insert both dependently and independently of the Sec translocase complex, as well as at least some lipoproteins. Aids folding of multispanning membrane proteins. The sequence is that of Membrane protein insertase YidC from Tolumonas auensis (strain DSM 9187 / NBRC 110442 / TA 4).